The primary structure comprises 248 residues: UPF0736 protein Bcer98_0893 (248 aa).

This sequence belongs to the UPF0736 family.

The polypeptide is UPF0736 protein Bcer98_0893 (Bacillus cytotoxicus (strain DSM 22905 / CIP 110041 / 391-98 / NVH 391-98)).